The chain runs to 83 residues: U2-hexatoxin-Hi1a (83 aa).

A signal peptide spans 1–23 (MRNTTFLVLNVMLLVSVALFCAA). Positions 24–45 (DPEMEKSSFAEILDTGNPEQER) are excised as a propeptide. 4 disulfides stabilise this stretch: C47–C63, C54–C68, C62–C78, and C70–C76.

It belongs to the neurotoxin 07 (Beta/delta-agtx) family. In terms of tissue distribution, expressed by the venom gland.

The protein localises to the secreted. In terms of biological role, inhibits sodium channels (Nav) of insects. The sequence is that of U2-hexatoxin-Hi1a from Hadronyche infensa (Fraser island funnel-web spider).